The sequence spans 426 residues: Synaptotagmin-13 (426 aa).

Residues M1–P6 lie on the Vesicular side of the membrane. A helical transmembrane segment spans residues V7–L29. Over C30–L426 the chain is Cytoplasmic. C2 domains follow at residues Q158–G275 and G287–H422.

It belongs to the synaptotagmin family. As to quaternary structure, interacts with NRXN1. As to expression, expressed in brain, pancreas and kidney.

It localises to the membrane. Its function is as follows. May be involved in transport vesicle docking to the plasma membrane. This Homo sapiens (Human) protein is Synaptotagmin-13 (SYT13).